A 66-amino-acid chain; its full sequence is Large ribosomal subunit protein bL35 (66 aa).

This sequence belongs to the bacterial ribosomal protein bL35 family.

This Rhodopseudomonas palustris (strain BisB18) protein is Large ribosomal subunit protein bL35.